The following is a 281-amino-acid chain: sn-glycerol-3-phosphate transport system permease protein UgpE (281 aa).

Helical transmembrane passes span 16-36 (LILGIAVILFPLYVAFVAATL), 85-105 (FSITLGKITVSMLSAFAIVWF), 113-133 (FFWMIFITLMLPVEVRIFPTV), 142-162 (LDSYAGLTLPLMASATATFLF), 202-222 (ALFVITFIYGWNQYLWPLLII), and 247-267 (WNSVMAAMLLTLIPPVVIVLV). In terms of domain architecture, ABC transmembrane type-1 spans 77–268 (LLNSFVMAFS…IPPVVIVLVM (192 aa)).

Belongs to the binding-protein-dependent transport system permease family. UgpAE subfamily. The complex is composed of two ATP-binding proteins (UgpC), two transmembrane proteins (UgpA and UgpE) and a solute-binding protein (UgpB).

It is found in the cell inner membrane. Functionally, part of the ABC transporter complex UgpBAEC involved in sn-glycerol-3-phosphate (G3P) import. Probably responsible for the translocation of the substrate across the membrane. The chain is sn-glycerol-3-phosphate transport system permease protein UgpE (ugpE) from Escherichia coli O157:H7.